Reading from the N-terminus, the 210-residue chain is Na(+)-translocating NADH-quinone reductase subunit D (210 aa).

A run of 5 helical transmembrane segments spans residues 42-62 (FVMTLAVTAVTAFSNLFISLI), 72-92 (IIAQMAVIASLVIVVDQVLKA), 103-123 (VFVGLIITNCIVMGRAEAYAM), 131-151 (FLDGIGNGLGYGAVLLTVATV), and 178-198 (NGLLLLPPSAFFIIGLIIWGV).

The protein belongs to the NqrDE/RnfAE family. As to quaternary structure, composed of six subunits; NqrA, NqrB, NqrC, NqrD, NqrE and NqrF.

The protein localises to the cell inner membrane. The catalysed reaction is a ubiquinone + n Na(+)(in) + NADH + H(+) = a ubiquinol + n Na(+)(out) + NAD(+). In terms of biological role, NQR complex catalyzes the reduction of ubiquinone-1 to ubiquinol by two successive reactions, coupled with the transport of Na(+) ions from the cytoplasm to the periplasm. NqrA to NqrE are probably involved in the second step, the conversion of ubisemiquinone to ubiquinol. The protein is Na(+)-translocating NADH-quinone reductase subunit D of Aeromonas salmonicida (strain A449).